The following is a 337-amino-acid chain: Ketol-acid reductoisomerase (NADP(+)) (337 aa).

The KARI N-terminal Rossmann domain occupies 3 to 183 (VEMFYDDDAD…GGTRAGVIKT (181 aa)). Residues 26–29 (YGSQ), Ser52, Ser54, and 84–87 (DTAQ) each bind NADP(+). The active site involves His109. Residue Gly135 participates in NADP(+) binding. One can recognise a KARI C-terminal knotted domain in the interval 184-329 (TFKEETETDL…AKLRGLMSWV (146 aa)). Mg(2+)-binding residues include Asp192, Glu196, Glu228, and Glu232. Ser253 provides a ligand contact to substrate.

The protein belongs to the ketol-acid reductoisomerase family. Mg(2+) is required as a cofactor.

The catalysed reaction is (2R)-2,3-dihydroxy-3-methylbutanoate + NADP(+) = (2S)-2-acetolactate + NADPH + H(+). The enzyme catalyses (2R,3R)-2,3-dihydroxy-3-methylpentanoate + NADP(+) = (S)-2-ethyl-2-hydroxy-3-oxobutanoate + NADPH + H(+). It participates in amino-acid biosynthesis; L-isoleucine biosynthesis; L-isoleucine from 2-oxobutanoate: step 2/4. The protein operates within amino-acid biosynthesis; L-valine biosynthesis; L-valine from pyruvate: step 2/4. Its function is as follows. Involved in the biosynthesis of branched-chain amino acids (BCAA). Catalyzes an alkyl-migration followed by a ketol-acid reduction of (S)-2-acetolactate (S2AL) to yield (R)-2,3-dihydroxy-isovalerate. In the isomerase reaction, S2AL is rearranged via a Mg-dependent methyl migration to produce 3-hydroxy-3-methyl-2-ketobutyrate (HMKB). In the reductase reaction, this 2-ketoacid undergoes a metal-dependent reduction by NADPH to yield (R)-2,3-dihydroxy-isovalerate. The protein is Ketol-acid reductoisomerase (NADP(+)) of Nocardia farcinica (strain IFM 10152).